A 100-amino-acid polypeptide reads, in one-letter code: Small ribosomal subunit protein uS17 (100 aa).

The protein belongs to the universal ribosomal protein uS17 family. In terms of assembly, part of the 30S ribosomal subunit.

One of the primary rRNA binding proteins, it binds specifically to the 5'-end of 16S ribosomal RNA. The sequence is that of Small ribosomal subunit protein uS17 from Erythrobacter litoralis (strain HTCC2594).